The sequence spans 1436 residues: tRNA (guanosine(18)-2'-O)-methyltransferase (1436 aa).

S-adenosyl-L-methionine is bound by residues 1365-1367 (LEQ), Gly-1389, and 1409-1418 (IQQFGVIRSM).

It belongs to the class IV-like SAM-binding methyltransferase superfamily. RNA methyltransferase TrmH family.

It is found in the cytoplasm. The enzyme catalyses guanosine(18) in tRNA + S-adenosyl-L-methionine = 2'-O-methylguanosine(18) in tRNA + S-adenosyl-L-homocysteine + H(+). S-adenosyl-L-methionine-dependent 2'-O-ribose methyltransferase that catalyzes the formation of 2'-O-methylguanosine at position 18 (Gm18) in various tRNAs. This Saccharomyces cerevisiae (strain ATCC 204508 / S288c) (Baker's yeast) protein is tRNA (guanosine(18)-2'-O)-methyltransferase.